An 888-amino-acid chain; its full sequence is Autotaxin (888 aa).

An N-terminal signal peptide occupies residues 1-27 (MARRRSCQLHQVISLFTFAVGVNICLG). Residues 28 to 35 (VTANRIKR) constitute a propeptide, removed by furin. An N-linked (GlcNAc...) asparagine glycan is attached at Asn54. SMB domains lie at 55–98 (ISGS…LKTA) and 99–143 (GGWE…GESH). 10 cysteine pairs are disulfide-bonded: Cys59–Cys76, Cys63–Cys94, Cys74–Cys87, Cys80–Cys86, Cys103–Cys120, Cys108–Cys138, Cys118–Cys131, Cys124–Cys130, Cys149–Cys195, and Cys157–Cys351. Residues 127–129 (RGD) carry the Cell attachment site motif. A phosphodiesterase region spans residues 145–502 (VDDDCEEIKT…PTFKYKTKVP (358 aa)). Residues Asp172 and Thr210 each contribute to the Zn(2+) site. Thr210 serves as the catalytic Nucleophile. 1-(9Z-octadecenoyl)-sn-glycero-3-phosphate-binding residues include Thr210, Asn231, and Asp312. Residues Thr210, Asn231, and Asp312 each contribute to the 1-hexadecanoyl-sn-glycero-3-phosphate site. Residues Thr210, Asn231, and Asp312 each coordinate 1-tetradecanoyl-sn-glycerol 3-phosphate. Residues Asp312, His316, Asp359, and His360 each contribute to the Zn(2+) site. Cystine bridges form between Cys367–Cys469, Cys414–Cys831, Cys567–Cys692, Cys569–Cys677, and Cys800–Cys810. Residue Asn411 is glycosylated (N-linked (GlcNAc...) asparagine). Residue His475 coordinates Zn(2+). 1-(9Z-octadecenoyl)-sn-glycero-3-phosphate is bound at residue His475. His475 lines the 1-hexadecanoyl-sn-glycero-3-phosphate pocket. His475 is a binding site for 1-tetradecanoyl-sn-glycerol 3-phosphate. Residue Asn525 is glycosylated (N-linked (GlcNAc...) asparagine). The interval 623–888 (LYGRPAVLYR…TYLQTYESEI (266 aa)) is nuclease-like domain. 5 residues coordinate Ca(2+): Asp765, Asp767, Asp769, Leu771, and Asp773. Asn832 carries N-linked (GlcNAc...) asparagine glycosylation. A required for secretion region spans residues 855–876 (IEHLTSLDFFRKTSRSYPEILT).

The protein belongs to the nucleotide pyrophosphatase/phosphodiesterase family. Requires Zn(2+) as cofactor. Ca(2+) is required as a cofactor. In terms of processing, N-glycosylation, but not furin-cleavage, plays a critical role on secretion and on lysoPLD activity. The interdomain disulfide bond between Cys-414 and Cys-831 is essential for catalytic activity. As to expression, detected in fetal serum (at protein level).

Its subcellular location is the secreted. It catalyses the reaction a 1-O-alkyl-sn-glycero-3-phosphoethanolamine + H2O = a 1-O-alkyl-sn-glycero-3-phosphate + ethanolamine + H(+). It carries out the reaction a 1-acyl-sn-glycero-3-phosphoethanolamine + H2O = a 1-acyl-sn-glycero-3-phosphate + ethanolamine + H(+). The enzyme catalyses 1-(9Z-octadecenoyl)-sn-glycero-3-phosphoethanolamine + H2O = 1-(9Z-octadecenoyl)-sn-glycero-3-phosphate + ethanolamine + H(+). The catalysed reaction is a 1-O-alkyl-sn-glycero-3-phosphocholine + H2O = a 1-O-alkyl-sn-glycero-3-phosphate + choline + H(+). It catalyses the reaction 1-O-(9Z-octadecenyl)-sn-glycero-3-phosphocholine + H2O = 1-O-(9Z-octadecenyl)-sn-glycero-3-phosphate + choline + H(+). It carries out the reaction 1-O-hexadecyl-sn-glycero-3-phosphocholine + H2O = 1-O-hexadecyl-sn-glycero-3-phosphate + choline + H(+). The enzyme catalyses a 1-O-(1Z-alkenyl)-sn-glycero-3-phosphocholine + H2O = a 1-O-(1Z-alkenyl)-sn-glycero-3-phosphate + choline + H(+). The catalysed reaction is a 1-acyl-sn-glycero-3-phosphocholine + H2O = a 1-acyl-sn-glycero-3-phosphate + choline + H(+). It catalyses the reaction 1-dodecanoyl-sn-glycero-3-phosphocholine + H2O = 1-dodecanoyl-sn-glycerol 3-phosphate + choline + H(+). It carries out the reaction 1-(9Z-octadecenoyl)-sn-glycero-3-phosphocholine + H2O = 1-(9Z-octadecenoyl)-sn-glycero-3-phosphate + choline + H(+). The enzyme catalyses 1-tetradecanoyl-sn-glycero-3-phosphocholine + H2O = 1-tetradecanoyl-sn-glycerol 3-phosphate + choline + H(+). The catalysed reaction is 1-decanoyl-sn-glycero-3-phosphocholine + H2O = 1-decanoyl-sn-glycero-3-phosphate + choline + H(+). It catalyses the reaction 1-octadecanoyl-sn-glycero-3-phosphocholine + H2O = 1-octadecanoyl-sn-glycero-3-phosphate + choline + H(+). It carries out the reaction 1-hexadecanoyl-sn-glycero-3-phosphocholine + H2O = 1-hexadecanoyl-sn-glycero-3-phosphate + choline + H(+). The enzyme catalyses 1-hexanoyl-sn-glycero-3-phosphocholine + H2O = 1-hexanoyl-sn-glycero-3-phosphate + choline + H(+). The catalysed reaction is 1-(9Z,12Z)-octadecadienoyl-sn-glycero-3-phosphocholine + H2O = 1-(9Z,12Z)-octadecadienoyl-sn-glycero-3-phosphate + choline + H(+). It catalyses the reaction sphing-4-enine-phosphocholine + H2O = sphing-4-enine 1-phosphate + choline + H(+). It carries out the reaction 1-(5Z,8Z,11Z,14Z-eicosatetraenoyl)-sn-glycero-3-phosphocholine + H2O = 1-(5Z,8Z,11Z,14Z-eicosatetraenoyl)-sn-glycero-3-phosphate + choline + H(+). The enzyme catalyses a 2-acyl-sn-glycero-3-phosphocholine + H2O = a 2-acyl-sn-glycerol 3-phosphate + choline + H(+). The catalysed reaction is a 1,2-diacyl-sn-glycero-3-phosphocholine + H2O = a 1,2-diacyl-sn-glycero-3-phosphate + choline + H(+). It catalyses the reaction 1,2-dioctanoyl-sn-glycero-3-phosphocholine + H2O = 1,2-dioctanoyl-sn-glycero-3-phosphate + choline + H(+). It carries out the reaction 1,2-didecanoyl-sn-glycero-3-phosphocholine + H2O = 1,2-didecanoyl-sn-glycero-3-phosphate + choline + H(+). The enzyme catalyses a 1-acyl-sn-glycero-3-phospho-L-serine + H2O = a 1-acyl-sn-glycero-3-phosphate + L-serine + H(+). The catalysed reaction is 1-(9Z-octadecenoyl)-sn-glycero-3-phospho-L-serine + H2O = 1-(9Z-octadecenoyl)-sn-glycero-3-phosphate + L-serine + H(+). It catalyses the reaction a 2-acyl-sn-glycero-3-phospho-L-serine + H2O = a 2-acyl-sn-glycerol 3-phosphate + L-serine + H(+). Its function is as follows. Secreted lysophospholipase D that hydrolyzes lysophospholipids to produce the signaling molecule lysophosphatidic acid (LPA) in extracellular fluids. Its major substrate is lysophosphatidylcholine. Can also act on sphingosylphosphorylcholine producing sphingosine-1-phosphate, a modulator of cell motility. Can hydrolyze, in vitro, bis-pNPP, to some extent pNP-TMP, and barely ATP. Involved in several motility-related processes such as angiogenesis and neurite outgrowth. Acts as an angiogenic factor by stimulating migration of smooth muscle cells and microtubule formation. Stimulates migration of melanoma cells, probably via a pertussis toxin-sensitive G protein. May have a role in induction of parturition. Possible involvement in cell proliferation and adipose tissue development. Required for LPA production in activated platelets, cleaves the sn-1 lysophospholipids to generate sn-1 lysophosphatidic acids containing predominantly 18:2 and 20:4 fatty acids. Shows a preference for the sn-1 to the sn-2 isomer of 1-O-alkyl-sn-glycero-3-phosphocholine (lyso-PAF). The protein is Autotaxin of Bos taurus (Bovine).